The chain runs to 790 residues: SH3 domain-containing protein 19 (790 aa).

2 disordered regions span residues 21–196 (EGQT…PVLQ) and 241–374 (EPIK…MDLQ). Residue Ser65 is modified to Phosphoserine. Over residues 287 to 296 (NTFSTVSGKL) the composition is skewed to polar residues. Pro residues predominate over residues 336 to 351 (QQPPTKVPPERPPPPK). The interaction with SH3GL1 stretch occupies residues 342 to 358 (VPPERPPPPKLSATRRS). The span at 365–374 (NRSSSDMDLQ) shows a compositional bias: polar residues. Ser369 carries the post-translational modification Phosphoserine. SH3 domains are found at residues 415-477 (LSVP…PLDE), 495-554 (SGAP…VIID), 571-630 (VKGS…PVED), 661-720 (LPAE…PCPA), and 730-789 (PKGR…FLQI). Residue Ser762 is modified to Phosphoserine.

As to quaternary structure, interacts with ADAM12. Isoform 4 and isoform 5 (but not isoform 1 and isoform 2) interact with ADAM9, ADAM10, ADAM15 and ADAM17. Interacts with SH3GL1 SH3 domain. Interacts via SH3 3 and SH3 4 or SH3 4 and SH3 5 domains with SOS2. Probably forms a trimeric complex with SH3GL1 and SOS2. Interacts with SH3YL1. Widely expressed with highest levels in heart, skeletal muscle, kidney, liver, placenta, small intestine and lung. Expressed at low levels in colon, thymus, spleen and leukocytes.

Its subcellular location is the cytoplasm. It is found in the nucleus. Functionally, may play a role in regulating A disintegrin and metalloproteases (ADAMs) in the signaling of EGFR-ligand shedding. May be involved in suppression of Ras-induced cellular transformation and Ras-mediated activation of ELK1. Plays a role in the regulation of cell morphology and cytoskeletal organization. In Homo sapiens (Human), this protein is SH3 domain-containing protein 19 (SH3D19).